The primary structure comprises 309 residues: Ribosomal RNA small subunit methyltransferase H (309 aa).

Residues 33 to 35 (GGH), D53, F79, D100, and Q107 contribute to the S-adenosyl-L-methionine site.

The protein belongs to the methyltransferase superfamily. RsmH family.

The protein resides in the cytoplasm. The catalysed reaction is cytidine(1402) in 16S rRNA + S-adenosyl-L-methionine = N(4)-methylcytidine(1402) in 16S rRNA + S-adenosyl-L-homocysteine + H(+). Specifically methylates the N4 position of cytidine in position 1402 (C1402) of 16S rRNA. This Clostridium botulinum (strain ATCC 19397 / Type A) protein is Ribosomal RNA small subunit methyltransferase H.